The primary structure comprises 157 residues: Large ribosomal subunit protein uL15 (157 aa).

Positions 1-13 (MKLNDLRDKDGAT) are enriched in basic and acidic residues. The tract at residues 1–39 (MKLNDLRDKDGATHSKKRLGRGIGSGSGKTAGRGVKGQK) is disordered. Residues 21–35 (RGIGSGSGKTAGRGV) are compositionally biased toward gly residues.

It belongs to the universal ribosomal protein uL15 family. Part of the 50S ribosomal subunit.

Binds to the 23S rRNA. This Mesorhizobium japonicum (strain LMG 29417 / CECT 9101 / MAFF 303099) (Mesorhizobium loti (strain MAFF 303099)) protein is Large ribosomal subunit protein uL15.